The chain runs to 409 residues: Pentatricopeptide repeat-containing protein At5g09450, mitochondrial (409 aa).

Residues 1 to 38 (MATRSLFHSLRCRLTNNGVLGSNFIRNAESSRFSKSYN) constitute a mitochondrion transit peptide. PPR repeat units follow at residues 155 to 189 (TAETYTSLLHAYAASKQTERAEALFKRIIESDSLT), 191 to 225 (GAITYNEMMTLYMSVGQVEKVPEVIEVLKQKKVSP), 226 to 256 (DIFTYNLWLSSCAATFNIDELRKILEEMRHD), 262 to 296 (GWVRYIDLTSIYINSSRVTNAESTLPVEAEKSISQ), 298 to 332 (EWITYDFLMILHTGLGNKVMIDQIWKSLRNTNQIL), and 333 to 367 (SSRSYICVLSSYLMLGHLREAEEIIHQWKESKTTE).

This sequence belongs to the PPR family. P subfamily.

It is found in the mitochondrion. The protein is Pentatricopeptide repeat-containing protein At5g09450, mitochondrial of Arabidopsis thaliana (Mouse-ear cress).